Reading from the N-terminus, the 429-residue chain is Argininosuccinate lyase (429 aa).

It belongs to the lyase 1 family. Argininosuccinate lyase subfamily.

The protein localises to the cytoplasm. It carries out the reaction 2-(N(omega)-L-arginino)succinate = fumarate + L-arginine. Its pathway is amino-acid biosynthesis; L-arginine biosynthesis; L-arginine from L-ornithine and carbamoyl phosphate: step 3/3. The chain is Argininosuccinate lyase from Pyrobaculum neutrophilum (strain DSM 2338 / JCM 9278 / NBRC 100436 / V24Sta) (Thermoproteus neutrophilus).